The following is a 454-amino-acid chain: Bifunctional protein GlmU (454 aa).

The segment at 1–226 (MALNVVILAA…AIEVEGANNR (226 aa)) is pyrophosphorylase. Residues 8 to 11 (LAAG), Lys22, Gln73, 78 to 79 (GT), 100 to 102 (YGD), Gly137, Glu151, Asn166, and Asn224 each bind UDP-N-acetyl-alpha-D-glucosamine. Mg(2+) is bound at residue Asp102. Asn224 contributes to the Mg(2+) binding site. Residues 227 to 247 (VQLAQLERAYQAREAEKLMIA) form a linker region. An N-acetyltransferase region spans residues 248–454 (GANLRDPSRI…GWQRPVKIKK (207 aa)). Arg330 and Lys348 together coordinate UDP-N-acetyl-alpha-D-glucosamine. Catalysis depends on His360, which acts as the Proton acceptor. UDP-N-acetyl-alpha-D-glucosamine contacts are provided by Tyr363 and Asn374. Acetyl-CoA-binding positions include Ala377, 383–384 (NY), Ser402, Ala420, and Arg437.

The protein in the N-terminal section; belongs to the N-acetylglucosamine-1-phosphate uridyltransferase family. In the C-terminal section; belongs to the transferase hexapeptide repeat family. As to quaternary structure, homotrimer. Mg(2+) serves as cofactor.

Its subcellular location is the cytoplasm. It carries out the reaction alpha-D-glucosamine 1-phosphate + acetyl-CoA = N-acetyl-alpha-D-glucosamine 1-phosphate + CoA + H(+). The enzyme catalyses N-acetyl-alpha-D-glucosamine 1-phosphate + UTP + H(+) = UDP-N-acetyl-alpha-D-glucosamine + diphosphate. The protein operates within nucleotide-sugar biosynthesis; UDP-N-acetyl-alpha-D-glucosamine biosynthesis; N-acetyl-alpha-D-glucosamine 1-phosphate from alpha-D-glucosamine 6-phosphate (route II): step 2/2. It participates in nucleotide-sugar biosynthesis; UDP-N-acetyl-alpha-D-glucosamine biosynthesis; UDP-N-acetyl-alpha-D-glucosamine from N-acetyl-alpha-D-glucosamine 1-phosphate: step 1/1. It functions in the pathway bacterial outer membrane biogenesis; LPS lipid A biosynthesis. In terms of biological role, catalyzes the last two sequential reactions in the de novo biosynthetic pathway for UDP-N-acetylglucosamine (UDP-GlcNAc). The C-terminal domain catalyzes the transfer of acetyl group from acetyl coenzyme A to glucosamine-1-phosphate (GlcN-1-P) to produce N-acetylglucosamine-1-phosphate (GlcNAc-1-P), which is converted into UDP-GlcNAc by the transfer of uridine 5-monophosphate (from uridine 5-triphosphate), a reaction catalyzed by the N-terminal domain. In Shewanella sp. (strain ANA-3), this protein is Bifunctional protein GlmU.